The chain runs to 192 residues: Transcription termination/antitermination protein NusG (192 aa).

The protein belongs to the NusG family.

In terms of biological role, participates in transcription elongation, termination and antitermination. The chain is Transcription termination/antitermination protein NusG from Rickettsia prowazekii (strain Madrid E).